We begin with the raw amino-acid sequence, 384 residues long: Bacterial ceramide synthase (384 aa).

The protein resides in the cytoplasm. The catalysed reaction is 3-oxosphinganine + a fatty acyl-CoA = N-acyl-3-oxosphinganine + CoA + H(+). It carries out the reaction 3-oxosphinganine + tetradecanoyl-CoA = N-tetradecanoyl-3-oxosphinganine + CoA + H(+). The enzyme catalyses 3-oxosphinganine + hexadecanoyl-CoA = N-hexadecanoyl-3-oxosphinganine + CoA + H(+). It catalyses the reaction 3-oxosphinganine + (9Z)-hexadecenoyl-CoA = N-(9Z-hexadecenoyl)-3-oxosphinganine + CoA + H(+). The catalysed reaction is 3-oxosphinganine + octanoyl-CoA = N-octanoyl-3-oxosphinganine + CoA + H(+). It carries out the reaction 3-oxosphinganine + decanoyl-CoA = N-decanoyl-3-oxosphinganine + CoA + H(+). The enzyme catalyses 3-oxosphinganine + dodecanoyl-CoA = N-dodecanoyl-3-oxosphinganine + CoA + H(+). It catalyses the reaction 3-oxosphinganine + octadecanoyl-CoA = N-octadecanoyl-3-oxosphinganine + CoA + H(+). The catalysed reaction is 3-oxosphinganine + eicosanoyl-CoA = N-eicosanoyl-3-oxosphinganine + CoA + H(+). It carries out the reaction 3-oxosphinganine + docosanoyl-CoA = N-docosanoyl-3-ketodihydrosphingosine + CoA + H(+). The enzyme catalyses 3-oxosphinganine + tetracosanoyl-CoA = N-tetracosanoyl-3-oxosphinganine + CoA + H(+). Its pathway is lipid metabolism; sphingolipid metabolism. In terms of biological role, involved in de novo bacterial ceramide synthesis. Catalyzes the condensation of 3-oxosphinganine with an acyl-CoA to generate oxidized ceramides. Can use acyl-CoA substrates ranging from C8 to C24, with highest in vitro activity with C14 and very little activity with acyl-CoA thioesters of 18 carbons or longer. May have a preference for monounsaturated acyl-CoA substrates, as it has a threefold greater preference for C16:1-CoA over C16:0-CoA as a substrate in vitro. The chain is Bacterial ceramide synthase from Caulobacter vibrioides (strain NA1000 / CB15N) (Caulobacter crescentus).